A 390-amino-acid chain; its full sequence is Cell division protein FtsZ (390 aa).

GTP-binding positions include 21–25 (GGGNN), 108–110 (GTG), Glu139, Arg143, and Asp187. The interval 315-390 (FDDKPTSHGR…EERRSRRTRR (76 aa)) is disordered. The span at 326-360 (SGSTGFGTSVNTSSNATSKDESFTSNSSNAQATDS) shows a compositional bias: polar residues. The segment covering 361–384 (VSERTHTTKEDDIPSFIRNREERR) has biased composition (basic and acidic residues).

Belongs to the FtsZ family. As to quaternary structure, homodimer. Polymerizes to form a dynamic ring structure in a strictly GTP-dependent manner. Interacts directly with several other division proteins.

Its subcellular location is the cytoplasm. Functionally, essential cell division protein that forms a contractile ring structure (Z ring) at the future cell division site. The regulation of the ring assembly controls the timing and the location of cell division. One of the functions of the FtsZ ring is to recruit other cell division proteins to the septum to produce a new cell wall between the dividing cells. Binds GTP and shows GTPase activity. The chain is Cell division protein FtsZ from Staphylococcus aureus (strain NCTC 8325 / PS 47).